We begin with the raw amino-acid sequence, 403 residues long: Heparan-sulfate 6-O-sulfotransferase 2 (403 aa).

Over 1–7 (MEDRSHK) the chain is Cytoplasmic. Residues 8–28 (VLLALVMLFLFAVIVLQYVCP) form a helical; Signal-anchor for type II membrane protein membrane-spanning segment. Over 29 to 403 (GTECQLLRLR…DYLGNVERWR (375 aa)) the chain is Lumenal. N-linked (GlcNAc...) asparagine glycosylation occurs at Asn64. Residue 88–96 (HIQKTGGTT) coordinates 3'-phosphoadenylyl sulfate. Residues 118-119 (KK), Arg135, Trp140, and His145 contribute to the substrate site. His145 serves as the catalytic Proton acceptor. 2 residues coordinate 3'-phosphoadenylyl sulfate: Arg180 and Ser188. Residues His192 and Trp199 each coordinate substrate. An N-linked (GlcNAc...) asparagine glycan is attached at Asn259. 312–314 (TQY) serves as a coordination point for 3'-phosphoadenylyl sulfate. Residue Asn315 is glycosylated (N-linked (GlcNAc...) asparagine). 318-319 (RA) contributes to the 3'-phosphoadenylyl sulfate binding site. The segment at 381–403 (AHLREQGENSSSTDYLGNVERWR) is disordered. Residue Asn389 is glycosylated (N-linked (GlcNAc...) asparagine).

Belongs to the sulfotransferase 6 family.

It is found in the membrane. The catalysed reaction is alpha-D-glucosaminyl-[heparan sulfate](n) + 3'-phosphoadenylyl sulfate = 6-sulfo-alpha-D-glucosaminyl-[heparan sulfate](n) + adenosine 3',5'-bisphosphate + H(+). Functionally, 6-O-sulfation enzyme which catalyzes the transfer of sulfate from 3'-phosphoadenosine 5'-phosphosulfate (PAPS) to position 6 of the N-sulfoglucosamine residue (GlcNS) of heparan sulfate. May also play a role in limb development. The sequence is that of Heparan-sulfate 6-O-sulfotransferase 2 (HS6ST2) from Gallus gallus (Chicken).